Reading from the N-terminus, the 443-residue chain is UDP-N-acetylmuramate--L-alanine ligase (443 aa).

111 to 117 contributes to the ATP binding site; it reads GAHGKTS.

Belongs to the MurCDEF family.

Its subcellular location is the cytoplasm. It catalyses the reaction UDP-N-acetyl-alpha-D-muramate + L-alanine + ATP = UDP-N-acetyl-alpha-D-muramoyl-L-alanine + ADP + phosphate + H(+). It participates in cell wall biogenesis; peptidoglycan biosynthesis. Cell wall formation. This Ligilactobacillus salivarius (strain UCC118) (Lactobacillus salivarius) protein is UDP-N-acetylmuramate--L-alanine ligase.